A 72-amino-acid polypeptide reads, in one-letter code: Defensin-like protein 35 (72 aa).

The N-terminal stretch at 1–22 is a signal peptide; that stretch reads MASNKISFSFVLCLYMCSLLDA. Disulfide bonds link Cys32/Cys58, Cys44/Cys67, and Cys48/Cys69.

The protein belongs to the DEFL family.

The protein resides in the secreted. The polypeptide is Defensin-like protein 35 (Arabidopsis thaliana (Mouse-ear cress)).